Consider the following 321-residue polypeptide: Lipoyl synthase (321 aa).

Residues Cys-68, Cys-73, Cys-79, Cys-94, Cys-98, Cys-101, and Ser-308 each contribute to the [4Fe-4S] cluster site. In terms of domain architecture, Radical SAM core spans 80–297 (FNHGTATFMI…KQEALAMGFT (218 aa)).

Belongs to the radical SAM superfamily. Lipoyl synthase family. Requires [4Fe-4S] cluster as cofactor.

The protein resides in the cytoplasm. It carries out the reaction [[Fe-S] cluster scaffold protein carrying a second [4Fe-4S](2+) cluster] + N(6)-octanoyl-L-lysyl-[protein] + 2 oxidized [2Fe-2S]-[ferredoxin] + 2 S-adenosyl-L-methionine + 4 H(+) = [[Fe-S] cluster scaffold protein] + N(6)-[(R)-dihydrolipoyl]-L-lysyl-[protein] + 4 Fe(3+) + 2 hydrogen sulfide + 2 5'-deoxyadenosine + 2 L-methionine + 2 reduced [2Fe-2S]-[ferredoxin]. Its pathway is protein modification; protein lipoylation via endogenous pathway; protein N(6)-(lipoyl)lysine from octanoyl-[acyl-carrier-protein]: step 2/2. Functionally, catalyzes the radical-mediated insertion of two sulfur atoms into the C-6 and C-8 positions of the octanoyl moiety bound to the lipoyl domains of lipoate-dependent enzymes, thereby converting the octanoylated domains into lipoylated derivatives. The sequence is that of Lipoyl synthase from Sodalis glossinidius (strain morsitans).